A 189-amino-acid chain; its full sequence is Segregation and condensation protein B (189 aa).

The protein belongs to the ScpB family. In terms of assembly, homodimer. Homodimerization may be required to stabilize the binding of ScpA to the Smc head domains. Component of a cohesin-like complex composed of ScpA, ScpB and the Smc homodimer, in which ScpA and ScpB bind to the head domain of Smc. The presence of the three proteins is required for the association of the complex with DNA.

Its subcellular location is the cytoplasm. In terms of biological role, participates in chromosomal partition during cell division. May act via the formation of a condensin-like complex containing Smc and ScpA that pull DNA away from mid-cell into both cell halves. In Lachnoclostridium phytofermentans (strain ATCC 700394 / DSM 18823 / ISDg) (Clostridium phytofermentans), this protein is Segregation and condensation protein B.